The chain runs to 98 residues: Serine protease inhibitor Kazal-type 14 (98 aa).

The signal sequence occupies residues 1 to 23 (MVKYFQVLWSLLFSIMLHSMLLA). The region spanning 35-98 (GLIKIKCPYK…QIRYYHTGRC (64 aa)) is the Kazal-like domain. 3 disulfides stabilise this stretch: Cys-41-Cys-80, Cys-58-Cys-77, and Cys-66-Cys-98. The N-linked (GlcNAc...) asparagine glycan is linked to Asn-52.

It is found in the secreted. In terms of biological role, may be a serine protease inhibitor. This chain is Serine protease inhibitor Kazal-type 14 (Spink14), found in Rattus norvegicus (Rat).